Reading from the N-terminus, the 29-residue chain is Toxin II.9 (29 aa).

The LCN-type CS-alpha/beta domain maps to 2-29; it reads KDGYLVNKYTGCKVNCYKLGENKFCNRE.

This sequence belongs to the long (4 C-C) scorpion toxin superfamily. Sodium channel inhibitor family. Beta subfamily. In terms of tissue distribution, expressed by the venom gland.

It localises to the secreted. In terms of biological role, binds to sodium channels (Nav) and shift the voltage of activation toward more negative potentials. This toxin is active on crustaceans. This Centruroides limpidus (Mexican scorpion) protein is Toxin II.9.